A 400-amino-acid polypeptide reads, in one-letter code: Putative cytochrome P450 133B2 (400 aa).

Cys-348 contributes to the heme binding site.

Belongs to the cytochrome P450 family. Heme is required as a cofactor.

The sequence is that of Putative cytochrome P450 133B2 (cyp133B2) from Xylella fastidiosa (strain 9a5c).